A 410-amino-acid polypeptide reads, in one-letter code: Voltage-dependent chloride channel 2, chloroplastic (410 aa).

Residues 1 to 110 (MYQSMNLSFS…RHVSSSPSSR (110 aa)) are Lumenal, thylakoid-facing. Residues 111–131 (VILSLIPPVFFFTTVAILIAG) form a helical membrane-spanning segment. The Stromal segment spans residues 132–147 (YNSAVDLDWLPDFFPV). A helical transmembrane segment spans residues 148–168 (LRASPLPYQLTAPALALLLVF). At 169–315 (RTEASYSRFE…PLSYTRLTSR (147 aa)) the chain is on the lumenal, thylakoid side. Transmembrane regions (helical) follow at residues 316 to 336 (FLVL…HWNV) and 337 to 357 (VPAT…GVLI). At 358–410 (EEPFSMLALDELCAMVLSNSDEAVESKEVIRNRIIAKKRILEIKHSSNGWHKS) the chain is on the lumenal, thylakoid side.

It belongs to the anion channel-forming bestrophin (TC 1.A.46) family. Voltage-dependent chloride channel subfamily. In terms of tissue distribution, mostly expressed in flowers and, to a lower extent, in leaves, stems and roots.

The protein resides in the plastid. Its subcellular location is the chloroplast thylakoid membrane. It carries out the reaction chloride(in) = chloride(out). Functionally, voltage-dependent chloride (Cl) channel probably contributing to proton motive force (PMF) partitioning across the thylakoid membrane by anion influx into the lumen. Influences thylakoid ultrastructure, including lumen size and organization. The chain is Voltage-dependent chloride channel 2, chloroplastic from Arabidopsis thaliana (Mouse-ear cress).